The following is a 47-amino-acid chain: Large ribosomal subunit protein eL40 (47 aa).

It belongs to the eukaryotic ribosomal protein eL40 family.

The chain is Large ribosomal subunit protein eL40 from Halobacterium salinarum (strain ATCC 29341 / DSM 671 / R1).